A 211-amino-acid chain; its full sequence is Cell division protein SepF (211 aa).

Over residues 15 to 26 the composition is skewed to acidic residues; the sequence is DTDEVNEVEEEV. A disordered region spans residues 15-111; the sequence is DTDEVNEVEE…ETYQAQTTVQ (97 aa). Composition is skewed to polar residues over residues 44–57, 64–81, and 91–111; these read IPSQ…QNPA, ARSQ…PNRQ, and RESV…TTVQ.

Belongs to the SepF family. As to quaternary structure, homodimer. Interacts with FtsZ.

It is found in the cytoplasm. Cell division protein that is part of the divisome complex and is recruited early to the Z-ring. Probably stimulates Z-ring formation, perhaps through the cross-linking of FtsZ protofilaments. Its function overlaps with FtsA. In Streptococcus uberis (strain ATCC BAA-854 / 0140J), this protein is Cell division protein SepF.